An 818-amino-acid chain; its full sequence is Serine/threonine-protein kinase PTK2/STK2 (818 aa).

Over residues 28 to 39 the composition is skewed to polar residues; that stretch reads NSSSHTDNSSLL. 2 disordered regions span residues 28 to 100 and 117 to 177; these read NSSS…GSVS and NPYL…SHHF. Position 56 is a phosphothreonine (Thr56). A compositionally biased stretch (low complexity) spans 57 to 81; the sequence is SPSISGSGSGGNSPSSSAGARQRSA. 2 positions are modified to phosphoserine: Ser59 and Ser80. Basic and acidic residues predominate over residues 136–160; that stretch reads TRDRDRAVLDREKEKERARNKERNT. The region spanning 255 to 562 is the Protein kinase domain; sequence DTDNKPIGSG…MDDLFNDPFF (308 aa). ATP-binding positions include 261 to 269 and Lys285; that span reads IGSGGSSEV. Asp388 (proton acceptor) is an active-site residue. The span at 585 to 595 shows a compositional bias: polar residues; that stretch reads STSTNDFSENS. The tract at residues 585-795 is disordered; that stretch reads STSTNDFSEN…SVSSSKKKKV (211 aa). Ser623 and Ser632 each carry phosphoserine. Composition is skewed to basic and acidic residues over residues 638–651 and 659–685; these read KVKDSAKTKTHDVG and TKPKQQDKKENLKKDEVKNGDKDKVIE. Position 694 is a phosphoserine (Ser694). Thr700 carries the post-translational modification Phosphothreonine. The residue at position 711 (Ser711) is a Phosphoserine. The segment covering 727 to 736 has biased composition (low complexity); sequence TPTTPTHNGP. Thr737 is modified (phosphothreonine). 4 positions are modified to phosphoserine: Ser752, Ser755, Ser778, and Ser781. The span at 755–767 shows a compositional bias: polar residues; it reads SLKSETPASTKNF. Residues 768 to 789 are compositionally biased toward low complexity; the sequence is SAPNVSSSSNSLRSLGSPSVSS.

The protein belongs to the protein kinase superfamily. Ser/Thr protein kinase family.

The protein resides in the nucleus. Its subcellular location is the cytoplasm. The catalysed reaction is L-seryl-[protein] + ATP = O-phospho-L-seryl-[protein] + ADP + H(+). The enzyme catalyses L-threonyl-[protein] + ATP = O-phospho-L-threonyl-[protein] + ADP + H(+). Functionally, essential determinant for high-affinity spermidine transport. Required for the activation of the plasma membrane proton pump PMA1 via phosphorylation of 'Ser-899'. In Saccharomyces cerevisiae (strain ATCC 204508 / S288c) (Baker's yeast), this protein is Serine/threonine-protein kinase PTK2/STK2 (PTK2).